We begin with the raw amino-acid sequence, 121 residues long: ORF8 protein (121 aa).

The first 15 residues, 1–15 (MKFLVFLGIITTVAA), serve as a signal peptide directing secretion. The region spanning 19–121 (ECSLQSCTQH…HDVRVVLDFI (103 aa)) is the SARS ORF8 Ig-like domain. 3 disulfide bridges follow: cysteine 25–cysteine 90, cysteine 37–cysteine 102, and cysteine 61–cysteine 83. A glycan (N-linked (GlcNAc...) (complex) asparagine; by host) is linked at asparagine 78.

Homodimer. Interacts with host IL17RA. Interacts with host IL17RC. Interacts with host MHC-I. Post-translationally, glycosylated by the host when secreted via the conventional pathway. The glycosylated form cannot bind IL17A and would not participate in the cytokine storm.

Its subcellular location is the secreted. In terms of biological role, plays a role in modulating the host immune response. May act as a secreted virokine by mimicking interleukin-17A (IL17A), and thereby binding to the IL17RA receptor, leading to activation of the IL17 pathway and increased secretion of pro-inflammatory factors. Contributes to the cytokine storm during SARS-CoV-2 infection when secreted by unconventional pathway. May act by down-regulating major histocompability complex class I (MHC-I) at cell surface. May inhibit expression of some members of the IFN-stimulated gene (ISG) family including hosts IGF2BP1/ZBP1, MX1 and MX2, and DHX58. This is ORF8 protein from Severe acute respiratory syndrome coronavirus 2 (2019-nCoV).